A 382-amino-acid polypeptide reads, in one-letter code: Small ribosomal subunit protein bS1 homolog (382 aa).

S1 motif domains lie at 16–84, 102–167, 188–256, and 273–342; these read GDVV…LSKR, KEVF…LSHR, GSVL…LSIK, and GDVL…LSMR. A Phosphoserine modification is found at serine 243.

This sequence belongs to the bacterial ribosomal protein bS1 family.

In terms of biological role, plays a role in sporulation. Cannot be expressed in wild-type E.coli, does not complement an E.coli rpsA deletion. The protein is Small ribosomal subunit protein bS1 homolog of Bacillus subtilis (strain 168).